A 296-amino-acid chain; its full sequence is MIKYFNRKTKQYEIEQVAGEKYLKWTYCSPIGMKLLELIIKKKIFSKLYGYFCNSRYSKKNIYPFIKNFNINMDDYIEQTDNFKCFNDFFSRALKNNSRSIDRDEKVLISPGDGRLQVYENIDLNKIVQIKGFTYSLYNLINDIEIAKRFYKGTCLILRLCPTDYHRFHFIDYGICDFTHKIKGNYYSVNPIALRNISNIFCRNKREWSIFHSKNFGDILYVEVGATCVGSIVQTYFPGKHVSKGDEKGYFKFGGSTIILFFEQNKIRIHKDLLEQSNMGYETKVLMGESIGIKYQ.

Catalysis depends on charge relay system; for autoendoproteolytic cleavage activity residues Asp-113, His-169, and Ser-256. The active-site Schiff-base intermediate with substrate; via pyruvic acid; for decarboxylase activity is Ser-256. Ser-256 carries the post-translational modification Pyruvic acid (Ser); by autocatalysis.

It belongs to the phosphatidylserine decarboxylase family. PSD-B subfamily. Prokaryotic type II sub-subfamily. As to quaternary structure, heterodimer of a large membrane-associated beta subunit and a small pyruvoyl-containing alpha subunit. The cofactor is pyruvate. Is synthesized initially as an inactive proenzyme. Formation of the active enzyme involves a self-maturation process in which the active site pyruvoyl group is generated from an internal serine residue via an autocatalytic post-translational modification. Two non-identical subunits are generated from the proenzyme in this reaction, and the pyruvate is formed at the N-terminus of the alpha chain, which is derived from the carboxyl end of the proenzyme. The autoendoproteolytic cleavage occurs by a canonical serine protease mechanism, in which the side chain hydroxyl group of the serine supplies its oxygen atom to form the C-terminus of the beta chain, while the remainder of the serine residue undergoes an oxidative deamination to produce ammonia and the pyruvoyl prosthetic group on the alpha chain. During this reaction, the Ser that is part of the protease active site of the proenzyme becomes the pyruvoyl prosthetic group, which constitutes an essential element of the active site of the mature decarboxylase.

It localises to the cell membrane. The enzyme catalyses a 1,2-diacyl-sn-glycero-3-phospho-L-serine + H(+) = a 1,2-diacyl-sn-glycero-3-phosphoethanolamine + CO2. The protein operates within phospholipid metabolism; phosphatidylethanolamine biosynthesis; phosphatidylethanolamine from CDP-diacylglycerol: step 2/2. Its function is as follows. Catalyzes the formation of phosphatidylethanolamine (PtdEtn) from phosphatidylserine (PtdSer). The protein is Phosphatidylserine decarboxylase proenzyme of Clostridium kluyveri (strain ATCC 8527 / DSM 555 / NBRC 12016 / NCIMB 10680 / K1).